We begin with the raw amino-acid sequence, 392 residues long: Peptidoglycan hydrolase PcsB (392 aa).

The first 27 residues, 1 to 27 (MKKKILASLLLSTVMVSQVAVLTTAHA), serve as a signal peptide directing secretion. Coiled coils occupy residues 34-96 (IAAQ…LSKN) and 191-227 (TKQA…AEAE). Residues 47–267 (QQQEAQKQVD…TAQVQAVSES (221 aa)) are interacts with large extracellular loop of FtsX. In terms of domain architecture, Peptidase C51 spans 267–390 (SAAAPVRAKV…TSEGFVTYIY (124 aa)).

As to quaternary structure, homodimer. Interacts (via N-terminal coiled coil domain) with FtsX (via large extracellular loop). This interaction directs PcsB to equatorial and septal sites of dividing cells. Interacts with FtsE.

Its subcellular location is the cell membrane. The protein localises to the cell septum. It is found in the secreted. With respect to regulation, lacks peptidoglycan-hydrolase activity in vitro, probably due to auto-inhibition by the CC domain. In the homodimer, interaction between the CC domain in one monomer and the hydrolase active site in the peptidase C51/CHAP domain in the other monomer probably mediates auto-inhibition of the hydrolase activity. Peptidoglycan-hydrolase activity. Required in maintaining normal growth and cellular morphology. Involved in splitting of the septum during cell division. This chain is Peptidoglycan hydrolase PcsB, found in Streptococcus pneumoniae serotype 2 (strain D39 / NCTC 7466).